A 714-amino-acid polypeptide reads, in one-letter code: Hormonally up-regulated neu tumor-associated kinase (714 aa).

Residues Met-1–Pro-16 are compositionally biased toward low complexity. Residues Met-1–Pro-28 form a disordered region. In terms of domain architecture, Protein kinase spans Leu-62–Leu-320. ATP contacts are provided by residues Leu-68 to Val-76 and Lys-91. Asp-186 serves as the catalytic Proton acceptor. The span at His-624–Gly-635 shows a compositional bias: basic and acidic residues. 2 disordered regions span residues His-624–Lys-658 and Lys-674–Cys-714. A compositionally biased stretch (polar residues) spans Ser-692–Ser-703.

Belongs to the protein kinase superfamily. CAMK Ser/Thr protein kinase family. SNF1 subfamily.

It catalyses the reaction L-seryl-[protein] + ATP = O-phospho-L-seryl-[protein] + ADP + H(+). The catalysed reaction is L-threonyl-[protein] + ATP = O-phospho-L-threonyl-[protein] + ADP + H(+). This is Hormonally up-regulated neu tumor-associated kinase (Hunk) from Mus musculus (Mouse).